The sequence spans 530 residues: [Pyruvate dehydrogenase [acetyl-transferring]]-phosphatase 2, mitochondrial (530 aa).

The N-terminal 67 residues, 1 to 67 (MSSTASYRIF…FALRKAYRHT (67 aa)), are a transit peptide targeting the mitochondrion. The 412-residue stretch at 107-518 (VLRFESNQLA…DDITVMVVFF (412 aa)) folds into the PPM-type phosphatase domain. Mn(2+) is bound by residues Asp142, Gly143, Asp413, and Asp509.

It belongs to the PP2C family. Requires Mg(2+) as cofactor. As to expression, highly expressed in liver.

Its subcellular location is the mitochondrion. The catalysed reaction is O-phospho-L-seryl-[pyruvate dehydrogenase E1 alpha subunit] + H2O = L-seryl-[pyruvate dehydrogenase E1 alpha subunit] + phosphate. Mg(2+)-dependent protein phosphatase. Phosphatase activity is increased in the presence of spermine, a naturally produced polyamine. Its function is as follows. Mitochondrial enzyme that catalyzes the dephosphorylation and concomitant reactivation of the alpha subunit of the E1 component of the pyruvate dehydrogenase complex (PDC), thereby stimulating the conversion of pyruvate into acetyl-CoA. Acts as a crucial regulator of T cell metabolism and function, with a particular focus on T-helper Th17. The chain is [Pyruvate dehydrogenase [acetyl-transferring]]-phosphatase 2, mitochondrial (Pdp2) from Rattus norvegicus (Rat).